A 239-amino-acid polypeptide reads, in one-letter code: Aspartate/glutamate leucyltransferase (239 aa).

It belongs to the R-transferase family. Bpt subfamily.

It localises to the cytoplasm. It catalyses the reaction N-terminal L-glutamyl-[protein] + L-leucyl-tRNA(Leu) = N-terminal L-leucyl-L-glutamyl-[protein] + tRNA(Leu) + H(+). The catalysed reaction is N-terminal L-aspartyl-[protein] + L-leucyl-tRNA(Leu) = N-terminal L-leucyl-L-aspartyl-[protein] + tRNA(Leu) + H(+). In terms of biological role, functions in the N-end rule pathway of protein degradation where it conjugates Leu from its aminoacyl-tRNA to the N-termini of proteins containing an N-terminal aspartate or glutamate. The protein is Aspartate/glutamate leucyltransferase of Campylobacter jejuni subsp. jejuni serotype O:6 (strain 81116 / NCTC 11828).